A 109-amino-acid polypeptide reads, in one-letter code: Cell division protein ZapA (109 aa).

A coiled-coil region spans residues 21 to 100 (PDQRDALNQA…EQALLERGRI (80 aa)).

This sequence belongs to the ZapA family. Type 1 subfamily. In terms of assembly, homodimer. Interacts with FtsZ.

It is found in the cytoplasm. In terms of biological role, activator of cell division through the inhibition of FtsZ GTPase activity, therefore promoting FtsZ assembly into bundles of protofilaments necessary for the formation of the division Z ring. It is recruited early at mid-cell but it is not essential for cell division. This is Cell division protein ZapA from Shigella dysenteriae serotype 1 (strain Sd197).